A 329-amino-acid chain; its full sequence is Isopenicillin N synthase (329 aa).

Isopenicillin N contacts are provided by R87, Y91, S183, and Y189. The N-[(5S)-5-amino-5-carboxypentanoyl]-L-cysteinyl-D-valine site is built by R87, Y91, S183, Y189, H212, and D214. The 107-residue stretch at 180 to 286 (SLSSVSLIRY…RLSLPFFLNG (107 aa)) folds into the Fe2OG dioxygenase domain. The Fe(2+) site is built by H212, D214, and H268. Position 277 (R277) interacts with 2-oxoglutarate. S279 provides a ligand contact to isopenicillin N. An N-[(5S)-5-amino-5-carboxypentanoyl]-L-cysteinyl-D-valine-binding site is contributed by S279.

The protein belongs to the iron/ascorbate-dependent oxidoreductase family. Fe cation serves as cofactor. It depends on L-ascorbate as a cofactor.

The catalysed reaction is N-[(5S)-5-amino-5-carboxypentanoyl]-L-cysteinyl-D-valine + O2 = isopenicillin N + 2 H2O. Its pathway is antibiotic biosynthesis; penicillin G biosynthesis; penicillin G from L-alpha-aminoadipate and L-cysteine and L-valine: step 2/3. In terms of biological role, removes, in the presence of oxygen, 4 hydrogen atoms from delta-L-(alpha-aminoadipyl)-L-cysteinyl-D-valine (ACV) to form the azetidinone and thiazolidine rings of isopenicillin. The protein is Isopenicillin N synthase (pcbC) of Streptomyces clavuligerus.